The following is a 1279-amino-acid chain: Maestro heat-like repeat-containing protein family member 7 (1279 aa).

Positions 1-145 (MALSRGTSLI…NSSRPCSEDV (145 aa)) are disordered. Low complexity predominate over residues 39–61 (PDLALAPPPEHALALTPALHPAL). 2 stretches are compositionally biased toward polar residues: residues 71–106 (PVSNDIPSHNASGATTPSSTQINTVDTADQGLNHTS) and 124–140 (PSSTQANVLSPENSSRP). Residues Asn200, Asn210, Asn255, Asn267, and Asn296 are each glycosylated (N-linked (GlcNAc...) asparagine). Ser356 is modified (phosphoserine). N-linked (GlcNAc...) asparagine glycosylation is present at Asn541. The next 2 membrane-spanning stretches (helical) occupy residues 548–568 (TLVTLPFLISSGFPTLGLLLG) and 722–742 (LLPISFLASSFMTEVVVALLM). 4 HEAT repeats span residues 913-950 (QELCRILYLLIPLLERGDERHKITATAFFVELFRMEQV), 992-1029 (AKVQSLLPSMVKSLKNMDGMLVVEAVHDLKRIFKGQGK), 1035-1072 (AVYVEMLQILLPHFTDAREMVRASCINVYGKVVKKLQT), and 1080-1117 (EQLTSTLMPLLFIIQEGNAKVSQKCVKTLVCCSSFMNW).

Its subcellular location is the membrane. The chain is Maestro heat-like repeat-containing protein family member 7 (Mroh7) from Mus musculus (Mouse).